A 447-amino-acid polypeptide reads, in one-letter code: Cysteine--tRNA ligase (447 aa).

Cys-28 is a binding site for Zn(2+). The 'HIGH' region signature appears at 30–40 (PTVYNYIHIGN). Zn(2+) is bound by residues Cys-211, His-236, and Glu-240. The 'KMSKS' region motif lies at 268-272 (KMSKS). Lys-271 provides a ligand contact to ATP.

Belongs to the class-I aminoacyl-tRNA synthetase family. Monomer. It depends on Zn(2+) as a cofactor.

Its subcellular location is the cytoplasm. It catalyses the reaction tRNA(Cys) + L-cysteine + ATP = L-cysteinyl-tRNA(Cys) + AMP + diphosphate. The protein is Cysteine--tRNA ligase of Streptococcus agalactiae serotype Ia (strain ATCC 27591 / A909 / CDC SS700).